Reading from the N-terminus, the 198-residue chain is MSAPRIGVLALQGDTREHLAALREAGAESMPVRRRGELEAVDGLVIPGGESTTMSHLLKDLDLLEPLRGLLADGLPAYGACAGMILLASEILDAGAGGREALPLRAIDMTVRRNAFGRQVDSFEGDIAFAGLDVPVRAVFIRAPWVERAGDGVEVLARAAGHVVAVRQGARLATAFHPEMTGDRRIHRLFVDLVTGVV.

49 to 51 serves as a coordination point for L-glutamine; it reads GES. Catalysis depends on C81, which acts as the Nucleophile. Residues R113 and 141-142 each bind L-glutamine; that span reads IR. Catalysis depends on charge relay system residues H177 and E179.

Belongs to the glutaminase PdxT/SNO family. In the presence of PdxS, forms a dodecamer of heterodimers. Only shows activity in the heterodimer.

It carries out the reaction aldehydo-D-ribose 5-phosphate + D-glyceraldehyde 3-phosphate + L-glutamine = pyridoxal 5'-phosphate + L-glutamate + phosphate + 3 H2O + H(+). It catalyses the reaction L-glutamine + H2O = L-glutamate + NH4(+). Its pathway is cofactor biosynthesis; pyridoxal 5'-phosphate biosynthesis. In terms of biological role, catalyzes the hydrolysis of glutamine to glutamate and ammonia as part of the biosynthesis of pyridoxal 5'-phosphate. The resulting ammonia molecule is channeled to the active site of PdxS. The chain is Pyridoxal 5'-phosphate synthase subunit PdxT from Mycobacterium avium (strain 104).